The chain runs to 242 residues: Uridylate kinase (242 aa).

K12–G15 is a binding site for ATP. The tract at residues G20–G25 is involved in allosteric activation by GTP. Position 54 (G54) interacts with UMP. Residues G55 and R59 each coordinate ATP. UMP-binding positions include D74 and T135–T142. ATP is bound by residues T162, Y168, and D171.

Belongs to the UMP kinase family. As to quaternary structure, homohexamer.

The protein resides in the cytoplasm. It carries out the reaction UMP + ATP = UDP + ADP. The protein operates within pyrimidine metabolism; CTP biosynthesis via de novo pathway; UDP from UMP (UMPK route): step 1/1. With respect to regulation, allosterically activated by GTP. Inhibited by UTP. Catalyzes the reversible phosphorylation of UMP to UDP. The polypeptide is Uridylate kinase (Pasteurella multocida (strain Pm70)).